A 496-amino-acid chain; its full sequence is Probable malate:quinone oxidoreductase (496 aa).

This sequence belongs to the MQO family. The cofactor is FAD.

It catalyses the reaction (S)-malate + a quinone = a quinol + oxaloacetate. It functions in the pathway carbohydrate metabolism; tricarboxylic acid cycle; oxaloacetate from (S)-malate (quinone route): step 1/1. In Prochlorococcus marinus (strain MIT 9313), this protein is Probable malate:quinone oxidoreductase.